Here is a 299-residue protein sequence, read N- to C-terminus: ClpXP adapter protein SpxH (299 aa).

This sequence belongs to the SpxH family. In terms of assembly, interacts with Spx. Interacts with SpxO/YuzO.

It is found in the cytoplasm. Its activity is regulated as follows. Irreversible aggregation upon several stress conditions prevents interaction with Spx and therefore leads to Spx stabilization. Inhibited by interaction with SpxO/YuzO. Its function is as follows. Adapter protein required for efficient degradation of Spx by ClpXP under non-stress conditions. Interaction with Spx stabilizes Spx and exposes the C-terminus of Spx for recognition and proteolysis by ClpXP. Is specific for Spx and does not enhance proteolysis by ClpCP protease. Probably binds 2 zinc ions. This is ClpXP adapter protein SpxH from Bacillus subtilis (strain 168).